A 154-amino-acid polypeptide reads, in one-letter code: Large ribosomal subunit protein uL23 (154 aa).

It belongs to the universal ribosomal protein uL23 family.

In terms of biological role, this protein binds to a specific region on the 26S rRNA. The protein is Large ribosomal subunit protein uL23 (RPL23A) of Fritillaria agrestis (Stinkbells).